We begin with the raw amino-acid sequence, 454 residues long: Carbamoyl phosphate synthase arginine-specific small chain (454 aa).

The transit peptide at 1-29 (MMFSRFFKAVPARAPAFSSPLPVYQARTM) directs the protein to the mitochondrion. One can recognise a Glutamine amidotransferase type-1 domain in the interval 219–406 (HVAVLDCGVK…IDSVKKYKNS (188 aa)). Catalysis depends on Cys-295, which acts as the Nucleophile. Residues His-379 and Glu-381 contribute to the active site.

It belongs to the CarA family. In terms of assembly, heterodimer composed of 2 chains; the small (or glutamine) chain promotes the hydrolysis of glutamine to ammonia, which is used by the large (or ammonia) chain to synthesize carbamoyl phosphate.

Its subcellular location is the mitochondrion matrix. The enzyme catalyses hydrogencarbonate + L-glutamine + 2 ATP + H2O = carbamoyl phosphate + L-glutamate + 2 ADP + phosphate + 2 H(+). It carries out the reaction L-glutamine + H2O = L-glutamate + NH4(+). The protein operates within amino-acid biosynthesis; L-arginine biosynthesis; carbamoyl phosphate from bicarbonate: step 1/1. Small subunit of the arginine-specific carbamoyl phosphate synthase (CPSase). CPSase catalyzes the formation of carbamoyl phosphate from the ammonia moiety of glutamine, carbonate, and phosphate donated by ATP, the first step of the arginine biosynthetic pathway. The small subunit (glutamine amidotransferase) binds and cleaves glutamine to supply the large subunit with the substrate ammonia. The polypeptide is Carbamoyl phosphate synthase arginine-specific small chain (cpa-1) (Emericella nidulans (strain FGSC A4 / ATCC 38163 / CBS 112.46 / NRRL 194 / M139) (Aspergillus nidulans)).